Here is a 397-residue protein sequence, read N- to C-terminus: Purine ribonucleoside efflux pump NepI (397 aa).

The Cytoplasmic portion of the chain corresponds to 1–21 (MNENIAEKFRADGVARPNWSA). Residues 22-42 (VFAVAFCVACLITVEFLPVSL) form a helical membrane-spanning segment. The Periplasmic segment spans residues 43–54 (LTPMAQDLGISE). Residues 55–75 (GVAGQSVTVTAFVAMFSSLFI) form a helical membrane-spanning segment. The Cytoplasmic portion of the chain corresponds to 76 to 85 (TQIIQATDRR). A helical transmembrane segment spans residues 86-106 (YIVILFAVLLTASCLMVSFAN). Residue Ser-107 is a topological domain, periplasmic. A helical transmembrane segment spans residues 108–128 (FTLLLLGRACLGLALGGFWAI). The Cytoplasmic segment spans residues 129–147 (SASLTMRLVPARTVPKALS). A helical transmembrane segment spans residues 148 to 168 (VIFGAVSIALVIAAPLGSFLG). Over 169-175 (GIIGWRN) the chain is Periplasmic. Residues 176–196 (VFNAAAVMGVLCVIWVVKSLP) traverse the membrane as a helical segment. Over 197–215 (SLPGEPSHQKQNMFSLLQR) the chain is Cytoplasmic. A helical transmembrane segment spans residues 216–236 (PGVMAGMIAIFMSFAGQFAFF). At 237–255 (TYIRPVYMNLAGFDVDGLT) the chain is on the periplasmic side. A helical membrane pass occupies residues 256–276 (LVLLSFGIASFVGTSFSSYVL). The Cytoplasmic segment spans residues 277 to 281 (KRSVK). The helical transmembrane segment at 282–302 (LALAGAPLLLALSALTLIVWG) threads the bilayer. The Periplasmic portion of the chain corresponds to 303–305 (SDK). A helical membrane pass occupies residues 306-326 (TVAAAIAIIWGLAFALVPVGW). Residues 327–343 (STWITRSLADQAEKAGS) lie on the Cytoplasmic side of the membrane. A helical transmembrane segment spans residues 344-364 (IQVAVIQLANTCGAAVGGYAL). Residues 365-366 (DN) are Periplasmic-facing. A helical transmembrane segment spans residues 367 to 387 (FGLLSPLALSGGLMLLTALVV). The Cytoplasmic portion of the chain corresponds to 388–397 (AAKVRITPMS).

Belongs to the major facilitator superfamily. DHA1 family. NepI (TC 2.A.1.2.26) subfamily.

The protein localises to the cell inner membrane. The catalysed reaction is inosine(in) + H(+)(out) = inosine(out) + H(+)(in). It carries out the reaction guanosine(in) + H(+)(out) = guanosine(out) + H(+)(in). In terms of biological role, involved in the efflux of purine ribonucleosides, such as inosine and guanosine. The polypeptide is Purine ribonucleoside efflux pump NepI (Salmonella paratyphi A (strain ATCC 9150 / SARB42)).